A 437-amino-acid polypeptide reads, in one-letter code: Aromatic peroxidase fscJ (437 aa).

A signal peptide spans 1-19; that stretch reads MKWLHLLSVVACVADEVYA. Position 83 (cysteine 83) interacts with heme.

The protein belongs to the chloroperoxidase family. The cofactor is heme b.

The protein operates within secondary metabolite biosynthesis. Its function is as follows. Aromatic peroxidase; part of the fragmented gene cluster that mediates the biosynthesis of fusarochromene, a tryptophan-derived metabolite closely related to a group of mycotoxins including fusarochromanone. The role of fscJ within the pathway has not been identified yet. The first step of the pathway is the epimerization of L-tryptophan to D-tryptophan in the presence of the NRPS-like tryptophan epimerase fscC. D-tryptophan is subsequently hydroxylated by the tryptophan 6-hydroxylase fscE to yield 6-hydroxytryptophan. The pyrrole ring undergoes cleavaged by the tryptophan 2,3-dioxygenase fscD and is finally converted to 4-hydroxykyrunenine by the hydrolase fscH. The NRPS-like oxidoreductase fscA reduces the carboxyl group to primary alcohol and the DMATS-type prenyltransferase fscG performs prenylation, followed by the formation of a chromene ring catalyzed by the oxidoreductase fscI, which leads to desacetylfusarochromene. Epoxidation by fscF and rearrangement reactions of chromene double bonds convert compound desacetylfusarochromene to fusarochromanones. Although specific acetyltransferases were not found near the fsc gene cluster, several predicted enzymes containing the N-acetyltransferase superfamily domain are present in the genome of F.equiseti. These predicted enzymes may have the potential to convert desacetylfusarochromene to fusarochromene. The protein is Aromatic peroxidase fscJ of Fusarium equiseti (Fusarium scirpi).